The sequence spans 104 residues: Thioredoxin (104 aa).

Residues 2–104 (AIVKVTDSDF…NLAEVLDKHL (103 aa)) enclose the Thioredoxin domain. Cys-29 and Cys-32 are disulfide-bonded.

It belongs to the thioredoxin family.

Functionally, component of the thioredoxin-thioredoxin reductase system. Participates in various redox reactions through the reversible oxidation of its active center dithiol to a disulfide and catalyzes dithiol-disulfide exchange reactions. The chain is Thioredoxin (trxA) from Staphylococcus epidermidis (strain ATCC 35984 / DSM 28319 / BCRC 17069 / CCUG 31568 / BM 3577 / RP62A).